Consider the following 247-residue polypeptide: Probable transcriptional regulatory protein HRM2_04000 (247 aa).

Belongs to the TACO1 family.

The protein resides in the cytoplasm. The polypeptide is Probable transcriptional regulatory protein HRM2_04000 (Desulforapulum autotrophicum (strain ATCC 43914 / DSM 3382 / VKM B-1955 / HRM2) (Desulfobacterium autotrophicum)).